Here is a 573-residue protein sequence, read N- to C-terminus: MTQGPGGRAAPEPEAPTTFCALLPRMPQWKFAAPGSFLGRGPAATRVAGVAEAQPEPGVPALAAVLGACEPRCAAPCPLPALGRCRGSGTRGARVTPDVADEWVRKGGFIHKPAHGWLHPDARVLGPGVSYIVRYMGCIEVLRSMRSLDFNTRTQVTREAINRLHEAVPGVRGSWKKKAPNKALASILGKSNLRFAGMSISVNISVDGLNLSVPATRQIIANHHMQSISFASGGDTDMTDYVAYVAKDPINQRACHILECCEGLAQSVISTVGQAFELRFKQYLHSPPKAVVPPERLTGLEELAWGDDDAAADHNYYNSIPGKEPPLGGLVDSRLAVTQPCALATLGGLGQGMTPVWRDARGLPWDMGPSGAAPPGDGYVQADARGPHDYEEHLYVNTQGLDAVELEDTAEAPLQFEDSPKKDLFDMRPFEDALKLHACSVAAGITAASPPLEDQWPSPPTRRAPIAPTEEQLRQEPWYHGRMSRRAAEKLLRADGDFLVRDSVTNPGQYVLTGMHAGQPKHLLLVDPEGVVRTKDVLFESISHLIDYHLKNGLPIVAAESELHLRGVVSREP.

The PID domain occupies 125-309 (LGPGVSYIVR…LEELAWGDDD (185 aa)). Positions 310–477 (AAADHNYYNS…PTEEQLRQEP (168 aa)) are CH1. Tyr-316, Tyr-317, and Tyr-395 each carry phosphotyrosine. Residues 478–569 (WYHGRMSRRA…ESELHLRGVV (92 aa)) enclose the SH2 domain.

In terms of assembly, interacts with the Trk receptors in a phosphotyrosine-dependent manner and MEGF12. Once activated, binds to GRB2. In terms of processing, phosphorylated on tyrosine by the Trk receptors. As to expression, expressed in brain. Expressed at high level in the hypothalamus and at low level in the caudate nucleus.

Its function is as follows. Signaling adapter that couples activated growth factor receptors to signaling pathway in neurons. Involved in the signal transduction pathways of neurotrophin-activated Trk receptors in cortical neurons. This chain is SHC-transforming protein 2 (Shc2), found in Mus musculus (Mouse).